The primary structure comprises 106 residues: Large ribosomal subunit protein eL42 (106 aa).

A disordered region spans residues serine 37–proline 56.

It belongs to the eukaryotic ribosomal protein eL42 family.

This is Large ribosomal subunit protein eL42 (RPL44) from Pichia kudriavzevii (Yeast).